A 130-amino-acid chain; its full sequence is Fumarate reductase subunit D (130 aa).

3 consecutive transmembrane segments (helical) span residues 35–55 (FAMI…LGVI), 67–87 (SFAT…LPMW), and 110–130 (IACY…IFMI).

This sequence belongs to the FrdD family. Part of an enzyme complex containing four subunits: a flavoprotein (FrdA), an iron-sulfur protein (FrdB), and two hydrophobic anchor proteins (FrdC and FrdD).

Its subcellular location is the cell inner membrane. In terms of biological role, anchors the catalytic components of the fumarate reductase complex to the cell membrane, binds quinones. This Vibrio cholerae serotype O1 (strain M66-2) protein is Fumarate reductase subunit D.